The sequence spans 327 residues: ATP-dependent 6-phosphofructokinase (327 aa).

Residues Gly11, 72–73 (RS), and 102–105 (GDGS) each bind ATP. Asp103 serves as a coordination point for Mg(2+). A substrate-binding site is contributed by 127–129 (TID). The active-site Proton acceptor is the Asp129. Arg156 contributes to the ADP binding site. Substrate is bound by residues Arg164 and 171 to 173 (MGR). 187–189 (GAE) is an ADP binding site. Substrate-binding positions include Glu224, Arg245, and 251–254 (HIQR).

It belongs to the phosphofructokinase type A (PFKA) family. ATP-dependent PFK group I subfamily. Prokaryotic clade 'B1' sub-subfamily. Homotetramer. Mg(2+) serves as cofactor.

It is found in the cytoplasm. It catalyses the reaction beta-D-fructose 6-phosphate + ATP = beta-D-fructose 1,6-bisphosphate + ADP + H(+). It participates in carbohydrate degradation; glycolysis; D-glyceraldehyde 3-phosphate and glycerone phosphate from D-glucose: step 3/4. With respect to regulation, allosterically activated by ADP and other diphosphonucleosides, and allosterically inhibited by phosphoenolpyruvate. In terms of biological role, catalyzes the phosphorylation of D-fructose 6-phosphate to fructose 1,6-bisphosphate by ATP, the first committing step of glycolysis. The sequence is that of ATP-dependent 6-phosphofructokinase from Sulfurovum sp. (strain NBC37-1).